Here is a 184-residue protein sequence, read N- to C-terminus: UPF0398 protein BCAH820_1652 (184 aa).

This sequence belongs to the UPF0398 family.

This is UPF0398 protein BCAH820_1652 from Bacillus cereus (strain AH820).